A 761-amino-acid chain; its full sequence is MATINDIGVAAAINIVTAFAFLLAFAIFRIQPVNDRVYFPKWYLKGLRSSSIQTGGFGSKFINLDFRSYIRFLNWMPEALKMPEPELVDHAGLDSVVYLRIYLLGLKIFFPIACVAFTTMVPVNWTNKGLDRLRHSNISFSDIDKLSLSNIPNGSPRFWVHLCMAYAITFWTCFILKREYQNIALMRLQFLANDQRRPNQFTVLVRNIPADPHESICELVEHFFKVNHPDHYLTFQAVHDATKLSELVLTRKQMQNLLDYNINKHMRNLSNRPVIKMGFLGCCGEEADGIKYYTSVVEGLTREISEEKQRLRTGTKSIVPAAFVSFKSRWGAAVCAQTQQTRNPTEWLTEWAAEPRDIYYDNLALPYVDLKIRRLIVGVAYFFLTFFFMIPIAFVQSLANIEGIEKAFPFLKPLIEVKLLKSIIQGFLPGIALKIFLLFLPRILMQMSKFEGFVSTSSLERRAATRFYMFQFINVFLGSIVTGTAFQQLNSFLNQSANDIPKTIGVSIPMKATFFITYIMVDGWAGVAGEILRLKPLIIYHLKNSFLVRTEKDREEATDPGTIGFNTGEPQIQLYFLLGLVYAAVSPILLPFILVFFGLAFVVYRHQVINVYNQKYESAGKFWPDVHRRVVTALVVSQLLLMGLLSTKHASKSTPLLLVLPLLTIGFHKHCKNRYQPAFVTYPLQQEAMIKDTLDRIREPNLNLKAFLRDAYAHPEFRVGEDPEPEEKLESDMSPPDLVATKRWSWRNTPLPSKDSCREIP.

10 consecutive transmembrane segments (helical) span residues 7–27, 101–121, 156–176, 375–395, 419–439, 467–487, 512–532, 583–603, 630–650, and 653–673; these read IGVAAAINIVTAFAFLLAFAI, IYLLGLKIFFPIACVAFTTMV, PRFWVHLCMAYAITFWTCFIL, LIVGVAYFFLTFFFMIPIAFV, LLKSIIQGFLPGIALKIFLLF, FYMFQFINVFLGSIVTGTAFQ, ATFFITYIMVDGWAGVAGEIL, AAVSPILLPFILVFFGLAFVV, VVTALVVSQLLLMGLLSTKHA, and STPLLLVLPLLTIGFHKHCKN. The span at 718–731 shows a compositional bias: basic and acidic residues; that stretch reads RVGEDPEPEEKLES. Positions 718–761 are disordered; the sequence is RVGEDPEPEEKLESDMSPPDLVATKRWSWRNTPLPSKDSCREIP.

It belongs to the CSC1 (TC 1.A.17) family.

It localises to the membrane. Acts as an osmosensitive calcium-permeable cation channel. This is Hyperosmolality-gated Ca2+ permeable channel 1.6 from Arabidopsis thaliana (Mouse-ear cress).